We begin with the raw amino-acid sequence, 482 residues long: Zinc finger CCCH domain-containing protein 40 (482 aa).

The C3H1-type zinc finger occupies 157–184 (RNRAHVCSFYVRGECTRGAECPYRHEMP). The RRM domain maps to 228-301 (RTLYIGGLNN…IRLKLMWGKP (74 aa)). Low complexity-rich tracts occupy residues 329–347 (SQQQ…GQQQ) and 389–428 (PGPQ…YGGY). A disordered region spans residues 329-482 (SQQQSGDQPQ…VPPPQQTTQN (154 aa)). A compositionally biased stretch (pro residues) spans 429–446 (MPPPRMPYPPPPQYPPYQ). Residues 452 to 466 (PAQSQASSSQQPAPA) are compositionally biased toward low complexity. Over residues 473-482 (VPPPQQTTQN) the composition is skewed to pro residues.

This chain is Zinc finger CCCH domain-containing protein 40, found in Oryza sativa subsp. japonica (Rice).